Consider the following 712-residue polypeptide: Elongation factor G (712 aa).

Positions 8 to 290 (TRYRNIGISA…AVIEFLPSPT (283 aa)) constitute a tr-type G domain. GTP contacts are provided by residues 17 to 24 (AHIDAGKT), 88 to 92 (DTPGH), and 142 to 145 (NKMD).

This sequence belongs to the TRAFAC class translation factor GTPase superfamily. Classic translation factor GTPase family. EF-G/EF-2 subfamily.

The protein localises to the cytoplasm. In terms of biological role, catalyzes the GTP-dependent ribosomal translocation step during translation elongation. During this step, the ribosome changes from the pre-translocational (PRE) to the post-translocational (POST) state as the newly formed A-site-bound peptidyl-tRNA and P-site-bound deacylated tRNA move to the P and E sites, respectively. Catalyzes the coordinated movement of the two tRNA molecules, the mRNA and conformational changes in the ribosome. This is Elongation factor G from Acinetobacter baumannii (strain SDF).